Reading from the N-terminus, the 175-residue chain is MSATDDLVSALRAADAVQFGEFELSHGGTSEYYVDKYLFETDPECLSAIAAAFADRIDEDTTLAGVALGGVPLAAATATEAGVPYVIARKQAKEYGTANRIEGRLDDGEEVVVVEDIATTGQSAVDAVDALRDAGATVNRALIVVDREEGGRELLAEHGVEMAALVTASDLLDAE.

5-phospho-alpha-D-ribose 1-diphosphate is bound by residues Arg-89, Lys-90, Lys-93, and 115–123 (EDIATTGQS). Residues Thr-119 and Arg-147 each coordinate orotate.

The protein belongs to the purine/pyrimidine phosphoribosyltransferase family. PyrE subfamily. Homodimer. Mg(2+) is required as a cofactor.

It carries out the reaction orotidine 5'-phosphate + diphosphate = orotate + 5-phospho-alpha-D-ribose 1-diphosphate. It functions in the pathway pyrimidine metabolism; UMP biosynthesis via de novo pathway; UMP from orotate: step 1/2. In terms of biological role, catalyzes the transfer of a ribosyl phosphate group from 5-phosphoribose 1-diphosphate to orotate, leading to the formation of orotidine monophosphate (OMP). This is Orotate phosphoribosyltransferase from Halobacterium salinarum (strain ATCC 700922 / JCM 11081 / NRC-1) (Halobacterium halobium).